Here is a 505-residue protein sequence, read N- to C-terminus: L-arabinose isomerase (505 aa).

The Mn(2+) site is built by Glu-310, Glu-337, His-354, and His-453.

The protein belongs to the arabinose isomerase family. The cofactor is Mn(2+).

It carries out the reaction beta-L-arabinopyranose = L-ribulose. The protein operates within carbohydrate degradation; L-arabinose degradation via L-ribulose; D-xylulose 5-phosphate from L-arabinose (bacterial route): step 1/3. Functionally, catalyzes the conversion of L-arabinose to L-ribulose. This Clavibacter sepedonicus (Clavibacter michiganensis subsp. sepedonicus) protein is L-arabinose isomerase.